The following is a 409-amino-acid chain: Peptidase T (409 aa).

His-78 provides a ligand contact to Zn(2+). Residue Asp-80 is part of the active site. Residue Asp-140 coordinates Zn(2+). The active-site Proton acceptor is Glu-173. Positions 174, 196, and 379 each coordinate Zn(2+).

The protein belongs to the peptidase M20B family. Zn(2+) serves as cofactor.

It is found in the cytoplasm. It carries out the reaction Release of the N-terminal residue from a tripeptide.. Cleaves the N-terminal amino acid of tripeptides. The chain is Peptidase T from Salmonella enteritidis PT4 (strain P125109).